We begin with the raw amino-acid sequence, 132 residues long: Agouti-signaling protein (132 aa).

Positions M1–S22 are cleaved as a signal peptide. N-linked (GlcNAc...) asparagine glycosylation occurs at N39. A disordered region spans residues K60–P88. The segment covering S63 to M79 has biased composition (basic and acidic residues). 5 disulfide bridges follow: C93/C108, C100/C114, C107/C125, C111/C132, and C116/C123. One can recognise an Agouti domain in the interval C93 to C132.

It localises to the secreted. Functionally, involved in the regulation of melanogenesis. The binding of ASP to MC1R precludes alpha-MSH initiated signaling and thus blocks production of cAMP, leading to a down-regulation of eumelanogenesis (brown/black pigment) and thus increasing synthesis of pheomelanin (yellow/red pigment). This chain is Agouti-signaling protein (ASIP), found in Macaca cyclopis (Taiwan macaque).